Here is a 348-residue protein sequence, read N- to C-terminus: Probable dual-specificity RNA methyltransferase RlmN (348 aa).

Catalysis depends on Glu-89, which acts as the Proton acceptor. The Radical SAM core domain occupies 95–328; it reads HKNRNTVCVS…VTLRISYGSK (234 aa). Cys-102 and Cys-333 are oxidised to a cystine. Positions 109, 113, and 116 each coordinate [4Fe-4S] cluster. S-adenosyl-L-methionine contacts are provided by residues 159–160, Ser-191, 214–216, and Asn-290; these read GE and SLH. Residue Cys-333 is the S-methylcysteine intermediate of the active site.

The protein belongs to the radical SAM superfamily. RlmN family. It depends on [4Fe-4S] cluster as a cofactor.

It localises to the cytoplasm. The enzyme catalyses adenosine(2503) in 23S rRNA + 2 reduced [2Fe-2S]-[ferredoxin] + 2 S-adenosyl-L-methionine = 2-methyladenosine(2503) in 23S rRNA + 5'-deoxyadenosine + L-methionine + 2 oxidized [2Fe-2S]-[ferredoxin] + S-adenosyl-L-homocysteine. It carries out the reaction adenosine(37) in tRNA + 2 reduced [2Fe-2S]-[ferredoxin] + 2 S-adenosyl-L-methionine = 2-methyladenosine(37) in tRNA + 5'-deoxyadenosine + L-methionine + 2 oxidized [2Fe-2S]-[ferredoxin] + S-adenosyl-L-homocysteine. Its function is as follows. Specifically methylates position 2 of adenine 2503 in 23S rRNA and position 2 of adenine 37 in tRNAs. The polypeptide is Probable dual-specificity RNA methyltransferase RlmN (Dictyoglomus turgidum (strain DSM 6724 / Z-1310)).